Reading from the N-terminus, the 137-residue chain is Large ribosomal subunit protein uL16c (137 aa).

The protein belongs to the universal ribosomal protein uL16 family. Part of the 50S ribosomal subunit.

It is found in the plastid. It localises to the chloroplast. The polypeptide is Large ribosomal subunit protein uL16c (Rhodomonas salina (Cryptomonas salina)).